The following is a 466-amino-acid chain: Endoglucanase E-5 (466 aa).

The N-terminal stretch at 1-36 (MAKSPAARKGXPPVAVAVTAALALLIALLSPGVAQA) is a signal peptide. Residues 37 to 139 (AGLTATVTKE…TINGAPCDEG (103 aa)) form the CBM2 domain. The tract at residues 129–166 (CTINGAPCDEGSEPGGPGGPGTPSPDPGTQPGTGTPVE) is disordered. Glu-299 acts as the Proton donor in catalysis. Glu-391 acts as the Nucleophile in catalysis.

It belongs to the glycosyl hydrolase 5 (cellulase A) family.

It carries out the reaction Endohydrolysis of (1-&gt;4)-beta-D-glucosidic linkages in cellulose, lichenin and cereal beta-D-glucans.. It functions in the pathway glycan metabolism; cellulose degradation. In Thermobifida fusca (Thermomonospora fusca), this protein is Endoglucanase E-5 (celE).